Here is a 259-residue protein sequence, read N- to C-terminus: Protein odd-skipped-related 1 (259 aa).

C2H2-type zinc fingers lie at residues 168 to 190, 196 to 218, and 224 to 246; these read FVCK…ERTH, YTCD…RYIH, and FKCQ…KTLH.

It belongs to the Odd C2H2-type zinc-finger protein family.

It localises to the nucleus. Functionally, transcriptional repressor. Required for pronephric kidney development. In Xenopus tropicalis (Western clawed frog), this protein is Protein odd-skipped-related 1.